The sequence spans 101 residues: uncharacterized protein (101 aa).

This is an uncharacterized protein from Neurospora crassa (strain ATCC 24698 / 74-OR23-1A / CBS 708.71 / DSM 1257 / FGSC 987).